A 306-amino-acid polypeptide reads, in one-letter code: Heterogeneous nuclear ribonucleoproteins C1/C2 (306 aa).

Residue Ala-2 is modified to N-acetylalanine. Residues Lys-8, Lys-50, Lys-89, and Lys-94 each participate in a glycyl lysine isopeptide (Lys-Gly) (interchain with G-Cter in SUMO2) cross-link. The 72-residue stretch at 16–87 (SRVFIGNLNT…QVLDINLAAE (72 aa)) folds into the RRM domain. Phosphoserine occurs at positions 107 and 108. Thr-109 carries the post-translational modification Phosphothreonine. Ser-113, Ser-115, and Ser-121 each carry phosphoserine. Disordered regions lie at residues 139–190 (YPAR…KLKG) and 221–306 (QSKQ…EDDS). The Nuclear localization signal signature appears at 155-161 (PSKRQRV). Phosphoserine occurs at positions 162 and 166. Low complexity predominate over residues 175-185 (SKSGQRGSSKS). Lys-176 bears the N6-acetyllysine; alternate mark. Residue Lys-176 forms a Glycyl lysine isopeptide (Lys-Gly) (interchain with G-Cter in SUMO2); alternate linkage. Positions 190–238 (GDDLQAIKKELTQIKQKVDSLLENLEKIEKEQSKQAVEMKNDKSEEEQS) form a coiled coil. Positions 221-232 (QSKQAVEMKNDK) are enriched in basic and acidic residues. Residues Lys-223 and Lys-229 each participate in a glycyl lysine isopeptide (Lys-Gly) (interchain with G-Cter in SUMO2) cross-link. Lys-232 participates in a covalent cross-link: Glycyl lysine isopeptide (Lys-Gly) (interchain with G-Cter in SUMO2); alternate. A Glycyl lysine isopeptide (Lys-Gly) (interchain with G-Cter in SUMO1); alternate cross-link involves residue Lys-232. Phosphoserine occurs at positions 233, 238, 239, and 241. Basic and acidic residues predominate over residues 242-253 (VKKDETNVKMES). Residues Lys-243 and Lys-244 each participate in a glycyl lysine isopeptide (Lys-Gly) (interchain with G-Cter in SUMO2) cross-link. Lys-250 participates in a covalent cross-link: Glycyl lysine isopeptide (Lys-Gly) (interchain with G-Cter in SUMO2); alternate. Lys-250 is covalently cross-linked (Glycyl lysine isopeptide (Lys-Gly) (interchain with G-Cter in SUMO); alternate). 2 positions are modified to phosphoserine: Ser-253 and Ser-260. Acidic residues predominate over residues 255-276 (GGADDSAEEGDLLDDDDNEDRG). Basic and acidic residues predominate over residues 277-287 (DDQLELIKDDE). A compositionally biased stretch (acidic residues) spans 288 to 306 (KEAEEGEDDRDSANGEDDS). 2 positions are modified to phosphoserine: Ser-299 and Ser-306.

This sequence belongs to the RRM HNRPC family. RALY subfamily. Tetramer composed of 3 copies of isoform C1 and 1 copy of isoform C2. Assembly of 3 tetramers with bound pre-mRNA gives rise to a 19S complex that interacts with HNRNPA2B1 tetramers. Component of the 40S hnRNP particle. Identified in the spliceosome C complex. Interacts with IGF2BP1. Interacts with DHX9; this interaction is direct, enhanced probably by their concomitant binding to RNA and mediates the attachment to actin filaments. Interacts with PPIA/CYPA. Interacts with YWHAE. Phosphorylated on Ser-260 and Ser-299 in resting cells. Phosphorylated on Ser-253 and on 1 serine residue in the poly-Ser stretch at position 238 in response to hydrogen peroxide. In terms of processing, sumoylated. Sumoylation reduces affinity for mRNA. Post-translationally, ubiquitinated and degraded after nucleo-cytoplasmic transport by YWHAE.

Its subcellular location is the nucleus. Functionally, binds pre-mRNA and nucleates the assembly of 40S hnRNP particles. Interacts with poly-U tracts in the 3'-UTR or 5'-UTR of mRNA and modulates the stability and the level of translation of bound mRNA molecules. Single HNRNPC tetramers bind 230-240 nucleotides. Trimers of HNRNPC tetramers bind 700 nucleotides. May play a role in the early steps of spliceosome assembly and pre-mRNA splicing. N6-methyladenosine (m6A) has been shown to alter the local structure in mRNAs and long non-coding RNAs (lncRNAs) via a mechanism named 'm(6)A-switch', facilitating binding of HNRNPC, leading to regulation of mRNA splicing. The polypeptide is Heterogeneous nuclear ribonucleoproteins C1/C2 (HNRNPC) (Homo sapiens (Human)).